Reading from the N-terminus, the 283-residue chain is Phosphatidylglycerol--prolipoprotein diacylglyceryl transferase (283 aa).

Transmembrane regions (helical) follow at residues 17 to 37 (LAVRWYALSYILGFILFTFLG), 56 to 76 (FLTWGILGVILGGRLGYVLFY), and 92 to 112 (WEGGMSFHGGFLGVVIAIWLF). Arg139 is a binding site for a 1,2-diacyl-sn-glycero-3-phospho-(1'-sn-glycerol). Helical transmembrane passes span 222 to 242 (GQTAALFLGGYGVFRFIAEFA) and 255 to 275 (GLSMGQWLSVPMIVLGIVGFV).

Belongs to the Lgt family.

It is found in the cell inner membrane. The enzyme catalyses L-cysteinyl-[prolipoprotein] + a 1,2-diacyl-sn-glycero-3-phospho-(1'-sn-glycerol) = an S-1,2-diacyl-sn-glyceryl-L-cysteinyl-[prolipoprotein] + sn-glycerol 1-phosphate + H(+). It participates in protein modification; lipoprotein biosynthesis (diacylglyceryl transfer). In terms of biological role, catalyzes the transfer of the diacylglyceryl group from phosphatidylglycerol to the sulfhydryl group of the N-terminal cysteine of a prolipoprotein, the first step in the formation of mature lipoproteins. This chain is Phosphatidylglycerol--prolipoprotein diacylglyceryl transferase, found in Neisseria gonorrhoeae (strain ATCC 700825 / FA 1090).